The sequence spans 108 residues: Small ribosomal subunit protein uS17 (108 aa).

This sequence belongs to the universal ribosomal protein uS17 family. As to quaternary structure, part of the 30S ribosomal subunit.

In terms of biological role, one of the primary rRNA binding proteins, it binds specifically to the 5'-end of 16S ribosomal RNA. The protein is Small ribosomal subunit protein uS17 of Methanoculleus marisnigri (strain ATCC 35101 / DSM 1498 / JR1).